The sequence spans 970 residues: Protein bicaudal C homolog 1-B (970 aa).

Residues 1–50 (MAAQCGGYMNQSDPGSNSERSADSPLPGSEDDSPGSAAPHDPEWREERFR) are disordered. Positions 9 to 19 (MNQSDPGSNSE) are enriched in polar residues. Residues 40 to 50 (HDPEWREERFR) are compositionally biased toward basic and acidic residues. KH domains are found at residues 130 to 197 (RVTL…RVRI) and 282 to 346 (PVST…RQYL). Polar residues predominate over residues 596–605 (EASRQSNNHS). Disordered regions lie at residues 596–638 (EASR…SANT), 677–696 (SDSE…APGS), and 773–841 (RRAN…NKSA). Residues 606-616 (SAEEVNSKTDS) are compositionally biased toward basic and acidic residues. Composition is skewed to polar residues over residues 783–810 (TMST…GSDS) and 819–831 (IDSS…SSIG). An SAM domain is found at 869–932 (FKGSDLPELF…LLAISELNKN (64 aa)).

It belongs to the BicC family.

Functionally, putative RNA-binding protein. May be involved in regulating gene expression during embryonic development. Seems to be involved in endoderm formation. Ectopic expression results in endoderm formation in the absence of mesoderm induction. The sequence is that of Protein bicaudal C homolog 1-B (bicc1-b) from Xenopus laevis (African clawed frog).